The sequence spans 502 residues: MKRVQTAEEREREAKKLRLLEELEDTWLPYLTPKDDEFYQQWQLKYPKLVFREAGSIPEELHKEVPEAFLTLHKHGCLFRDVVRIQGKDVLTPVSRILIGDPGCTYKYLNTRLFTVPWPVKGCTVKYTEAEIAAACQTFLKLNDYLQVETIQALEELAVREKANEDAVPLCMAEFPRAGVGPSCDDEVDLKSRAAYNVTLLNFMDPQKMPYLKEEPYFGMGKMAVSWHHDENLVDRSAVAVYSYSCEGSEDESEDESSFEGRDPDTWHVGFKISWDIETPGLTIPLHQGDCYFMLDDLNATHQHCVLAGSQPRFSSTHRVAECSTGTLDYILERCQLALQNVLNDSDDGDVSLKSFDPAVLKQGEEIHNEVEFEWLRQFWFQGNRYKLCTDWWCEPMTHLEGLWKKMESMTNAVLREVKREGLPVEQRSEILSAILVPLTVRQNLRKEWHARCQSRVVRTLPVQQKPDCRPYWEKDDPSMPLPFDLTDVVSELRGQLLEARS.

The fe2OG dioxygenase domain stretch occupies residues 32 to 324 (TPKDDEFYQQ…SSTHRVAECS (293 aa)). Residues arginine 96 and tyrosine 108 each contribute to the substrate site. 2-oxoglutarate is bound at residue asparagine 202. The loop L1; predicted to block binding of double-stranded DNA or RNA stretch occupies residues 210-221 (PYLKEEPYFGMG). The residue at position 213 (lysine 213) is an N6-acetyllysine. Fe cation-binding residues include histidine 228 and aspartate 230. Substrate is bound at residue 228–231 (HHDE). A 2-oxoglutarate-binding site is contributed by tyrosine 292. A Fe cation-binding site is contributed by histidine 304. 2-oxoglutarate contacts are provided by residues 313-315 (RFS), threonine 317, and arginine 319.

It belongs to the fto family. As to quaternary structure, monomer. May also exist as homodimer. It depends on Fe(2+) as a cofactor. Ubiquitous. Detected in brain, brain cortex, hypothalamus, cerebellum, liver, pancreas, heart, kidney, white adipose tissue and skeletal muscle. Most abundant in the brain, particularly in hypothalamic nuclei governing energy balance.

It is found in the nucleus. The protein resides in the nucleus speckle. The protein localises to the cytoplasm. The catalysed reaction is a 5'-end (N(7)-methyl 5'-triphosphoguanosine)-(N(6),2'-O-dimethyladenosine) in mRNA + 2-oxoglutarate + O2 = a 5'-end (N(7)-methyl 5'-triphosphoguanosine)-(2'-O-methyladenosine) in mRNA + formaldehyde + succinate + CO2. It carries out the reaction an N(6)-methyladenosine in mRNA + 2-oxoglutarate + O2 = an adenosine in mRNA + formaldehyde + succinate + CO2. It catalyses the reaction N(6)-methyladenosine in U6 snRNA + 2-oxoglutarate + O2 = adenosine in U6 snRNA + formaldehyde + succinate + CO2. The enzyme catalyses a 5'-end (N(7)-methyl 5'-triphosphoguanosine)-(N(6),2'-O-dimethyladenosine) in U6 snRNA + 2-oxoglutarate + O2 = a 5'-end (N(7)-methyl 5'-triphosphoguanosine)-(2'-O-methyladenosine) in U6 snRNA + formaldehyde + succinate + CO2. The catalysed reaction is an N(1)-methyladenosine in tRNA + 2-oxoglutarate + O2 = an adenosine in tRNA + formaldehyde + succinate + CO2. Its activity is regulated as follows. Activated by ascorbate. Inhibited by N-oxalylglycine, fumarate and succinate. RNA demethylase that mediates oxidative demethylation of different RNA species, such as mRNAs, tRNAs and snRNAs, and acts as a regulator of fat mass, adipogenesis and energy homeostasis. Specifically demethylates N(6)-methyladenosine (m6A) RNA, the most prevalent internal modification of messenger RNA (mRNA) in higher eukaryotes. M6A demethylation by FTO affects mRNA expression and stability. Also able to demethylate m6A in U6 small nuclear RNA (snRNA). Mediates demethylation of N(6),2'-O-dimethyladenosine cap (m6A(m)), by demethylating the N(6)-methyladenosine at the second transcribed position of mRNAs and U6 snRNA. Demethylation of m6A(m) in the 5'-cap by FTO affects mRNA stability by promoting susceptibility to decapping. Also acts as a tRNA demethylase by removing N(1)-methyladenine from various tRNAs. Has no activity towards 1-methylguanine. Has no detectable activity towards double-stranded DNA. Also able to repair alkylated DNA and RNA by oxidative demethylation: demethylates single-stranded RNA containing 3-methyluracil, single-stranded DNA containing 3-methylthymine and has low demethylase activity towards single-stranded DNA containing 1-methyladenine or 3-methylcytosine. Ability to repair alkylated DNA and RNA is however unsure in vivo. Involved in the regulation of fat mass, adipogenesis and body weight, thereby contributing to the regulation of body size and body fat accumulation. Involved in the regulation of thermogenesis and the control of adipocyte differentiation into brown or white fat cells. Regulates activity of the dopaminergic midbrain circuitry via its ability to demethylate m6A in mRNAs. The chain is Alpha-ketoglutarate-dependent dioxygenase FTO from Mus musculus (Mouse).